The chain runs to 56 residues: Trypsin inhibitor 1 (56 aa).

The signal sequence occupies residues 1-25 (MATTMAKLITLVVLAILAFVEVSVS). A propeptide spanning residues 26–39 (GYKTSISTITIEDN) is cleaved from the precursor. A cross-link (cyclopeptide (Gly-Asp)) is located at residues 40–53 (GRCTKSIPPICFPD). The cysteines at positions 42 and 50 are disulfide-linked. A propeptide spanning residues 54-56 (GRP) is cleaved from the precursor.

This is a cyclic peptide.

Its function is as follows. Inhibits trypsin, cathepsin G, elastase, chymotrypsin and thrombin. Does not inhibit factor Xa. The chain is Trypsin inhibitor 1 from Helianthus annuus (Common sunflower).